The sequence spans 177 residues: Transcription antitermination protein NusB (177 aa).

A disordered region spans residues 1-35; the sequence is MTDSANPTPSARPPRQPRTGTTGTGARKAGSKSGR. The span at 17–28 shows a compositional bias: low complexity; it reads PRTGTTGTGARK.

Belongs to the NusB family.

Its function is as follows. Involved in transcription antitermination. Required for transcription of ribosomal RNA (rRNA) genes. Binds specifically to the boxA antiterminator sequence of the ribosomal RNA (rrn) operons. In Acidovorax ebreus (strain TPSY) (Diaphorobacter sp. (strain TPSY)), this protein is Transcription antitermination protein NusB.